A 130-amino-acid polypeptide reads, in one-letter code: MAREPRCRRVEYMPRVECFKPAGIPLSRLEEVQIKVEELEAIRLKDYLRLEQEDCARRMQVSRPTFQRILVEARAKIAYALSSGRAIRIEGGNYCMGAGYCRRRQREIREGEPCDFKGIAIRTESDATDN.

This sequence belongs to the UPF0251 family.

The protein is UPF0251 protein Swol_2090 of Syntrophomonas wolfei subsp. wolfei (strain DSM 2245B / Goettingen).